The sequence spans 138 residues: Holo-[acyl-carrier-protein] synthase (138 aa).

Asp-8 and Glu-56 together coordinate Mg(2+).

This sequence belongs to the P-Pant transferase superfamily. AcpS family. Mg(2+) is required as a cofactor.

The protein resides in the cytoplasm. It carries out the reaction apo-[ACP] + CoA = holo-[ACP] + adenosine 3',5'-bisphosphate + H(+). Functionally, transfers the 4'-phosphopantetheine moiety from coenzyme A to a Ser of acyl-carrier-protein. The protein is Holo-[acyl-carrier-protein] synthase of Clostridium novyi (strain NT).